We begin with the raw amino-acid sequence, 206 residues long: Small ribosomal subunit protein uS4 (206 aa).

An S4 RNA-binding domain is found at 94–156; the sequence is RRLDNVVYRL…SRRRMYFKNL (63 aa).

Belongs to the universal ribosomal protein uS4 family. In terms of assembly, part of the 30S ribosomal subunit. Contacts protein S5. The interaction surface between S4 and S5 is involved in control of translational fidelity.

Its function is as follows. One of the primary rRNA binding proteins, it binds directly to 16S rRNA where it nucleates assembly of the body of the 30S subunit. With S5 and S12 plays an important role in translational accuracy. The protein is Small ribosomal subunit protein uS4 of Roseiflexus castenholzii (strain DSM 13941 / HLO8).